The sequence spans 388 residues: Succinate--CoA ligase [ADP-forming] subunit beta (388 aa).

An ATP-grasp domain is found at Lys-9–His-244. Residues Lys-46, Gly-53 to Gly-55, Glu-99, Thr-102, and Glu-107 each bind ATP. Positions 199 and 213 each coordinate Mg(2+). Residues Asn-264 and Gly-321–Val-323 contribute to the substrate site.

This sequence belongs to the succinate/malate CoA ligase beta subunit family. As to quaternary structure, heterotetramer of two alpha and two beta subunits. Requires Mg(2+) as cofactor.

It carries out the reaction succinate + ATP + CoA = succinyl-CoA + ADP + phosphate. The enzyme catalyses GTP + succinate + CoA = succinyl-CoA + GDP + phosphate. The protein operates within carbohydrate metabolism; tricarboxylic acid cycle; succinate from succinyl-CoA (ligase route): step 1/1. Succinyl-CoA synthetase functions in the citric acid cycle (TCA), coupling the hydrolysis of succinyl-CoA to the synthesis of either ATP or GTP and thus represents the only step of substrate-level phosphorylation in the TCA. The beta subunit provides nucleotide specificity of the enzyme and binds the substrate succinate, while the binding sites for coenzyme A and phosphate are found in the alpha subunit. In Shewanella woodyi (strain ATCC 51908 / MS32), this protein is Succinate--CoA ligase [ADP-forming] subunit beta.